The primary structure comprises 273 residues: MSLQQTIEQAFENRNEYSPATMPQDVRDAINQVLEQLDNGTLRVAEKKDGEWVVNQWAKKAVLLSFRLNDNYVQAAGEHVQFYDKVPTKFANWTEAQFKEAGVRVVPPAVARKGSYIAPGAVLMPSYVNIGAYVDQGAMVDTWATVGSCAQIGKNVHLSGGVGIGGVLEPLQANPTIIEDNCFIGARSEIVEGVIVEEGAVISMGVYIGQSTRIYDRETGEIHRGRVPAGSVVVPGSLPSEDGTHSLYAAIIVKKVDAQTRAKTSVNELLRLA.

Residues Arg104 and Asp141 each coordinate substrate.

It belongs to the transferase hexapeptide repeat family. In terms of assembly, homotrimer.

It is found in the cytoplasm. The catalysed reaction is (S)-2,3,4,5-tetrahydrodipicolinate + succinyl-CoA + H2O = (S)-2-succinylamino-6-oxoheptanedioate + CoA. Its pathway is amino-acid biosynthesis; L-lysine biosynthesis via DAP pathway; LL-2,6-diaminopimelate from (S)-tetrahydrodipicolinate (succinylase route): step 1/3. The chain is 2,3,4,5-tetrahydropyridine-2,6-dicarboxylate N-succinyltransferase from Psychrobacter cryohalolentis (strain ATCC BAA-1226 / DSM 17306 / VKM B-2378 / K5).